Here is a 215-residue protein sequence, read N- to C-terminus: Large ribosomal subunit protein bL25 (215 aa).

The tract at residues 174–215 (ETVVTVQPPATEKEEETEAAVTDSEPEVINEKEEPAEEAKEE) is disordered. Acidic residues predominate over residues 186-215 (KEEETEAAVTDSEPEVINEKEEPAEEAKEE).

The protein belongs to the bacterial ribosomal protein bL25 family. CTC subfamily. Part of the 50S ribosomal subunit; part of the 5S rRNA/L5/L18/L25 subcomplex. Contacts the 5S rRNA. Binds to the 5S rRNA independently of L5 and L18.

This is one of the proteins that binds to the 5S RNA in the ribosome where it forms part of the central protuberance. The polypeptide is Large ribosomal subunit protein bL25 (Halalkalibacterium halodurans (strain ATCC BAA-125 / DSM 18197 / FERM 7344 / JCM 9153 / C-125) (Bacillus halodurans)).